Reading from the N-terminus, the 587-residue chain is Pyruvate decarboxylase 3 (587 aa).

Substrate is bound by residues Asp-48 and His-135. Residues 415-496 are thiamine pyrophosphate binding; it reads DSWFNCQKLR…FLINNGGYTI (82 aa). Asp-464, Asn-491, and Gly-493 together coordinate Mg(2+). Glu-497 lines the substrate pocket.

It belongs to the TPP enzyme family. As to quaternary structure, homotetramer. A metal cation serves as cofactor. Requires thiamine diphosphate as cofactor.

The enzyme catalyses a 2-oxocarboxylate + H(+) = an aldehyde + CO2. In Oryza sativa subsp. japonica (Rice), this protein is Pyruvate decarboxylase 3 (PDC3).